We begin with the raw amino-acid sequence, 192 residues long: Phosphoheptose isomerase (192 aa).

An SIS domain is found at 35–192 (LIETLENQGK…CIERHFANKN (158 aa)). A substrate-binding site is contributed by 50-52 (NGG). Positions 59 and 63 each coordinate Zn(2+). Substrate contacts are provided by residues glutamate 63, 92 to 93 (ND), 118 to 120 (STS), serine 123, and glutamine 170. Residues glutamine 170 and histidine 178 each contribute to the Zn(2+) site.

Belongs to the SIS family. GmhA subfamily. Homotetramer. Zn(2+) is required as a cofactor.

Its subcellular location is the cytoplasm. The enzyme catalyses 2 D-sedoheptulose 7-phosphate = D-glycero-alpha-D-manno-heptose 7-phosphate + D-glycero-beta-D-manno-heptose 7-phosphate. It functions in the pathway carbohydrate biosynthesis; D-glycero-D-manno-heptose 7-phosphate biosynthesis; D-glycero-alpha-D-manno-heptose 7-phosphate and D-glycero-beta-D-manno-heptose 7-phosphate from sedoheptulose 7-phosphate: step 1/1. Catalyzes the isomerization of sedoheptulose 7-phosphate in D-glycero-D-manno-heptose 7-phosphate. The protein is Phosphoheptose isomerase of Helicobacter pylori (strain Shi470).